A 194-amino-acid polypeptide reads, in one-letter code: Fe/S biogenesis protein NfuA (194 aa).

[4Fe-4S] cluster contacts are provided by Cys151 and Cys154.

This sequence belongs to the NfuA family. In terms of assembly, homodimer. The cofactor is [4Fe-4S] cluster.

Its function is as follows. Involved in iron-sulfur cluster biogenesis. Binds a 4Fe-4S cluster, can transfer this cluster to apoproteins, and thereby intervenes in the maturation of Fe/S proteins. Could also act as a scaffold/chaperone for damaged Fe/S proteins. This is Fe/S biogenesis protein NfuA from Photobacterium profundum (strain SS9).